The sequence spans 392 residues: MPADHHAPDAALRLAQDLIRCPSVTPEDRGALDVVADALRPAGFAIERPVFAEPGYPDTPNLYARIGQNGPCLVFAGHTDVVPEGEGAWRHDPFAGAVADGMLYGRGAADMKGGVACMLAATLAFLDRRGADFGGSIAFLITGDEEGPAVNGTVKLLDWARRRGERFDHCVLGEPTNPGRLGEMIKIGRRGSLTGKLTVLGRQGHVAYPHKAENPIPGLLRLASALIAEPLDRGTAHFDASNLEFTTVDVGNPATNVIPSTARATFNVRFNDDWTAESLGAEIRRRLEQAAGNAVRFTLDLQPSNAPAFLTRPDAFVTLVAEAIRAETGLTPTLSTTGGTSDARFIKDACPVIEFGLVGETMHQVDECVAVADLERLTAIYGRVLDAYFPGS.

Position 78 (His78) interacts with Zn(2+). Asp80 is a catalytic residue. Asp110 serves as a coordination point for Zn(2+). Glu145 (proton acceptor) is an active-site residue. Residues Glu146, Glu174, and His363 each contribute to the Zn(2+) site.

Belongs to the peptidase M20A family. DapE subfamily. Homodimer. Zn(2+) is required as a cofactor. The cofactor is Co(2+).

The catalysed reaction is N-succinyl-(2S,6S)-2,6-diaminopimelate + H2O = (2S,6S)-2,6-diaminopimelate + succinate. The protein operates within amino-acid biosynthesis; L-lysine biosynthesis via DAP pathway; LL-2,6-diaminopimelate from (S)-tetrahydrodipicolinate (succinylase route): step 3/3. Catalyzes the hydrolysis of N-succinyl-L,L-diaminopimelic acid (SDAP), forming succinate and LL-2,6-diaminopimelate (DAP), an intermediate involved in the bacterial biosynthesis of lysine and meso-diaminopimelic acid, an essential component of bacterial cell walls. The polypeptide is Succinyl-diaminopimelate desuccinylase (Methylobacterium radiotolerans (strain ATCC 27329 / DSM 1819 / JCM 2831 / NBRC 15690 / NCIMB 10815 / 0-1)).